The primary structure comprises 119 residues: Large ribosomal subunit protein uL22c (119 aa).

It belongs to the universal ribosomal protein uL22 family. Part of the 50S ribosomal subunit.

The protein localises to the plastid. It localises to the chloroplast. Functionally, this protein binds specifically to 23S rRNA. Its function is as follows. The globular domain of the protein is located near the polypeptide exit tunnel on the outside of the subunit, while an extended beta-hairpin is found that lines the wall of the exit tunnel in the center of the 70S ribosome. The protein is Large ribosomal subunit protein uL22c (rpl22) of Mesostigma viride (Green alga).